The chain runs to 128 residues: Sulfurtransferase TusD (128 aa).

Cys78 functions as the Cysteine persulfide intermediate in the catalytic mechanism.

It belongs to the DsrE/TusD family. Heterohexamer, formed by a dimer of trimers. The hexameric TusBCD complex contains 2 copies each of TusB, TusC and TusD. The TusBCD complex interacts with TusE.

Its subcellular location is the cytoplasm. Its function is as follows. Part of a sulfur-relay system required for 2-thiolation of 5-methylaminomethyl-2-thiouridine (mnm(5)s(2)U) at tRNA wobble positions. Accepts sulfur from TusA and transfers it in turn to TusE. The polypeptide is Sulfurtransferase TusD (Escherichia fergusonii (strain ATCC 35469 / DSM 13698 / CCUG 18766 / IAM 14443 / JCM 21226 / LMG 7866 / NBRC 102419 / NCTC 12128 / CDC 0568-73)).